The chain runs to 391 residues: MRTLEEVQGTLQIAKVKEEDLQPVTYCLSFGDNVSSGDYCLMEVDENLCKHIESGKSLIIRGDKDEHAVLCSEDKTYDLKIADTSNLLLFVPGCKTPDQLSDIPASPQLMHTQIWGFSNCYWELRRQRPRLKKLKKLLMENPYDGPPVGMQEEAPGLKYSMEDLLERIQASKEELEAHLGNVHACEIDGFWRILDFDYEMKLLGHVTQLVDSESWSFSKVPLSVCLEELGSLEPKAMIEHCLNCYGRRHSDEDNQVMYALDEDKVCRATAQLLLQNAVKFNLSEFQEVWQQSVPEGMGTRLDQLRGLALIDRSSKPETISLLRVEDLPEDTLERFNSLFSLREKWTQDDIEPYIQDLCGEKQTTGALLTKHARSSMQNGIKVYNSRRPVAT.

It belongs to the DCC1 family. In terms of assembly, component of the ctf18-RFC complex which consists of ctf18, ctf8, dscc1 and the RFC complex.

Its subcellular location is the nucleus. Functionally, loads pcna onto primed templates regulating velocity, spacing and restart activity of replication forks. May couple DNA replication to sister chromatid cohesion. This Danio rerio (Zebrafish) protein is Sister chromatid cohesion protein DCC1 (dscc1).